A 2177-amino-acid polypeptide reads, in one-letter code: Brefeldin A-inhibited guanine nucleotide-exchange protein 3 (2177 aa).

The segment covering 282–295 (TSSTSTSLESDSAS) has biased composition (low complexity). Residues 282 to 301 (TSSTSTSLESDSASPGVSDH) form a disordered region. At Ser471 the chain carries Phosphoserine. Residues 511 to 524 (TGQTTLEGELGQTT) are compositionally biased toward polar residues. Disordered stretches follow at residues 511-542 (TGQTTLEGELGQTTPEDHSGNHKNSLKSPAIP), 617-636 (AAEKDSGRSDVSDIGSDNCS), and 1031-1076 (DGAS…LSTA). The SEC7 domain maps to 583–796 (RTRSYGSRYS…EELYHQVLDR (214 aa)). Residues 618–627 (AEKDSGRSDV) are compositionally biased toward basic and acidic residues. A phosphoserine mark is found at Ser632 and Ser636. Residues 1032–1047 (GASQPPLTISQPQKAT) show a composition bias toward polar residues. Ser1049 is subject to Phosphoserine. Residues 1492–1512 (GPGFGIYAVVHLLLPVMSVWL) traverse the membrane as a helical segment. 3 disordered regions span residues 1848–1877 (STDSSQQCSSEDEDIFEETAQVSPPRGKEK), 1946–2004 (ESST…RKKE), and 2033–2064 (KQQHNLSAFPKEVKVEKKGEPLGPRGQDSPLL). The segment covering 1960 to 1974 (TPSEDDRSQSREHMG) has biased composition (basic and acidic residues). A Phosphoserine modification is found at Ser1991. Composition is skewed to basic and acidic residues over residues 1993 to 2004 (KVEKKDPSRKKE) and 2043 to 2052 (KEVKVEKKGE). Phosphoserine occurs at positions 2079, 2081, 2095, 2101, and 2103. The disordered stretch occupies residues 2082–2103 (AGPELLRQDKRPRSGSTGSSLS).

Interacts with PHB2. As to expression, expressed in breast cancer cell lines. Not expressed in normal tissues such as duct, mammary gland, lung, heart, liver, kidnay, bone marrow.

The protein localises to the cytoplasm. The protein resides in the cytoplasmic vesicle. It is found in the secretory vesicle. Its subcellular location is the secretory vesicle membrane. Functionally, participates in the regulation of systemic glucose homeostasis, where it negatively regulates insulin granule biogenesis in pancreatic islet beta cells. Also regulates glucagon granule production in pancreatic alpha cells. Inhibits nuclear translocation of the transcriptional coregulator PHB2 and may enhance estrogen receptor alpha (ESR1) transcriptional activity in breast cancer cells. The protein is Brefeldin A-inhibited guanine nucleotide-exchange protein 3 of Homo sapiens (Human).